The sequence spans 332 residues: Ketol-acid reductoisomerase (NADP(+)) (332 aa).

A KARI N-terminal Rossmann domain is found at 2 to 182; it reads ANIYYDEDAS…GATRAGLIET (181 aa). Residues 25 to 28, S51, S53, and 83 to 86 each bind NADP(+); these read YGSQ and DTVQ. H108 is an active-site residue. G134 contributes to the NADP(+) binding site. The region spanning 183 to 327 is the KARI C-terminal knotted domain; it reads TFKEETETDL…KELRKMMPWL (145 aa). The Mg(2+) site is built by D191, E195, E227, and E231. S252 lines the substrate pocket.

This sequence belongs to the ketol-acid reductoisomerase family. Mg(2+) is required as a cofactor.

The enzyme catalyses (2R)-2,3-dihydroxy-3-methylbutanoate + NADP(+) = (2S)-2-acetolactate + NADPH + H(+). It carries out the reaction (2R,3R)-2,3-dihydroxy-3-methylpentanoate + NADP(+) = (S)-2-ethyl-2-hydroxy-3-oxobutanoate + NADPH + H(+). Its pathway is amino-acid biosynthesis; L-isoleucine biosynthesis; L-isoleucine from 2-oxobutanoate: step 2/4. The protein operates within amino-acid biosynthesis; L-valine biosynthesis; L-valine from pyruvate: step 2/4. Involved in the biosynthesis of branched-chain amino acids (BCAA). Catalyzes an alkyl-migration followed by a ketol-acid reduction of (S)-2-acetolactate (S2AL) to yield (R)-2,3-dihydroxy-isovalerate. In the isomerase reaction, S2AL is rearranged via a Mg-dependent methyl migration to produce 3-hydroxy-3-methyl-2-ketobutyrate (HMKB). In the reductase reaction, this 2-ketoacid undergoes a metal-dependent reduction by NADPH to yield (R)-2,3-dihydroxy-isovalerate. This Sulfurihydrogenibium sp. (strain YO3AOP1) protein is Ketol-acid reductoisomerase (NADP(+)).